The chain runs to 287 residues: MRGRSYTPSPPRGYGRRGRSPSPRGRYGGRSRDLPTSLLVRNLRHDCRQEDLRKSFEQFGPVKDIYLPRDYYTGDPRGFGFVQFMDPADAADAKHHMDGYLLLGRELTVVFAEENRKKPTEMRARERGGGRFRDRRRTPPRYYSRSRSPPPRRGRSRSRSGDYYSPPPRRHHPRSISPREERYDGRRSYSRSPASDGSRGRSLTPVRGKSRSLSPSPRRSISRSPRRSRSPSPKRNRSVSPRRSISRSPRRSRSPRRSRRSYTPEPARSRSQSPHGGQYDEDRSPSQ.

The interval 1–34 (MRGRSYTPSPPRGYGRRGRSPSPRGRYGGRSRDL) is disordered. A phosphoserine mark is found at serine 9 and serine 20. The 79-residue stretch at 36 to 114 (TSLLVRNLRH…RELTVVFAEE (79 aa)) folds into the RRM domain. Residues 116-132 (RKKPTEMRARERGGGRF) show a composition bias toward basic and acidic residues. The segment at 116 to 287 (RKKPTEMRAR…QYDEDRSPSQ (172 aa)) is disordered. Serine 165, serine 175, serine 177, serine 188, and serine 190 each carry phosphoserine. Basic and acidic residues predominate over residues 177–187 (SPREERYDGRR). Over residues 220-237 (SISRSPRRSRSPSPKRNR) the composition is skewed to basic residues. Phosphoserine is present on residues serine 238, serine 248, serine 271, serine 284, and serine 286. Residues 244–260 (SISRSPRRSRSPRRSRR) show a composition bias toward basic residues. Over residues 278–287 (QYDEDRSPSQ) the composition is skewed to basic and acidic residues.

The protein belongs to the splicing factor SR family. SCL subfamily. Component of the spliceosome. Homodimer. Interacts with AFC2, CYP59, RS2Z33, RNU1 and SR45. The interaction with AFC2 depends on phosphorylation status. In terms of processing, phosphorylated by AFC2. Ubiquitous. Mostly expressed in roots, fruits and flowers, and, to a lower extent, in leaves.

It localises to the nucleus speckle. Its subcellular location is the nucleus. The protein resides in the nucleoplasm. It is found in the cytoplasm. In terms of biological role, involved in intron recognition and spliceosome assembly. Binds to multiple 5'-GAAG-3' repeats found in its third intron, suggesting autoregulation of alternative splicing. May be necessary for accurate splicing of the 3' region of introns. In Arabidopsis thaliana (Mouse-ear cress), this protein is Serine/arginine-rich SC35-like splicing factor SCL33 (SCL33).